Here is a 305-residue protein sequence, read N- to C-terminus: Putative F-box protein PP2-B8 (305 aa).

An F-box domain is found at 33-79; that stretch reads VAELDDLPEECVSIIVSFTSPQDACVLASVSKTFASAVKSDIVWEKF.

The chain is Putative F-box protein PP2-B8 (PP2B8) from Arabidopsis thaliana (Mouse-ear cress).